A 241-amino-acid polypeptide reads, in one-letter code: ATP synthase subunit a (241 aa).

Helical transmembrane passes span 30-50, 91-111, 128-148, 193-213, and 214-234; these read GQVFMTSWILIGALLTLVVVG, FIGTLFLFIFVSNWGGALIPW, INTTVALALLVSLSYFYAGLS, LVVAVLVFLVPLVLPVPVMFL, and GLFTSAIQALIFATLAAYYIG.

The protein belongs to the ATPase A chain family. F-type ATPases have 2 components, CF(1) - the catalytic core - and CF(0) - the membrane proton channel. CF(1) has five subunits: alpha(3), beta(3), gamma(1), delta(1), epsilon(1). CF(0) has four main subunits: a, b, b' and c.

The protein resides in the cellular thylakoid membrane. Its function is as follows. Key component of the proton channel; it plays a direct role in the translocation of protons across the membrane. The chain is ATP synthase subunit a from Prochlorococcus marinus (strain SARG / CCMP1375 / SS120).